The sequence spans 976 residues: R3H domain-containing protein 2 (976 aa).

Disordered stretches follow at residues 32-71 and 105-147; these read ISKT…AKSN and ISCP…QEYT. Positions 36–56 are enriched in basic and acidic residues; sequence PSKEEIEKECEDTSLRQETQR. Serine 37 is subject to Phosphoserine. Positions 58–71 are enriched in basic residues; sequence TSNHGHARKRAKSN. Residues 109-143 are compositionally biased toward basic and acidic residues; that stretch reads SDKEEEKSTKDVSEKEDKDKNKEKIPRKMLSRDSS. Serine 143 is subject to Phosphoserine. In terms of domain architecture, R3H spans 169–232; the sequence is RMMLLKLEQE…AVIINKTSNT (64 aa). Residues 233–310 form the SUZ domain; the sequence is RIPEQRFSEH…NREGLSRTSS (78 aa). Positions 257 to 269 are enriched in basic and acidic residues; that stretch reads LKRDDASMDRDDN. Disordered stretches follow at residues 257 to 376, 401 to 457, 480 to 560, 661 to 725, and 738 to 780; these read LKRD…ISRP, CTAQ…EAAD, ASTG…PGLQ, GTSP…PSMV, and RGQK…SLSS. Over residues 306–317 the composition is skewed to low complexity; it reads SRTSSSRQSSTD. Phosphoserine is present on residues serine 330, serine 333, and serine 349. Positions 401-415 are enriched in low complexity; that stretch reads CTAQQQQQQQQQQLP. Polar residues-rich tracts occupy residues 441–453 and 480–504; these read PFGQ…QGST and ASTG…QQVL. Residues 543-560 show a composition bias toward low complexity; it reads SPQRGQQLPQPSQQPGLQ. Positions 682–691 are enriched in pro residues; that stretch reads SPSPCSPPQM. Residues 692-714 show a composition bias toward low complexity; the sequence is PQQYSGVSPSGPGVVVMQLNVPN. The span at 748–758 shows a compositional bias: polar residues; the sequence is PDSSPQANTQM. Residues 759 to 777 show a composition bias toward low complexity; sequence SSSPVTSPTQSPAPSPVTS. Phosphoserine occurs at positions 853 and 855. Phosphothreonine occurs at positions 856 and 860.

It localises to the nucleus. The polypeptide is R3H domain-containing protein 2 (R3HDM2) (Homo sapiens (Human)).